Reading from the N-terminus, the 104-residue chain is Colipase-like protein 2 (104 aa).

A signal peptide spans 1–19; the sequence is MAFTQALVTVLAFLVGTLP. Disulfide bonds link Cys38-Cys49, Cys44-Cys60, Cys48-Cys82, Cys70-Cys90, and Cys84-Cys101.

Belongs to the colipase family.

It is found in the secreted. The protein is Colipase-like protein 2 (Clpsl2) of Rattus norvegicus (Rat).